A 512-amino-acid chain; its full sequence is 2-isopropylmalate synthase (512 aa).

In terms of domain architecture, Pyruvate carboxyltransferase spans 4–266 (IQFFDTTLRD…ETNIVLNQFK (263 aa)). The Mn(2+) site is built by Asp-13, His-201, His-203, and Asn-237. The interval 390–512 (ELKHLQVQYV…SKQADFEEVK (123 aa)) is regulatory domain.

Belongs to the alpha-IPM synthase/homocitrate synthase family. LeuA type 1 subfamily. Homodimer. Mn(2+) is required as a cofactor.

The protein localises to the cytoplasm. The enzyme catalyses 3-methyl-2-oxobutanoate + acetyl-CoA + H2O = (2S)-2-isopropylmalate + CoA + H(+). It participates in amino-acid biosynthesis; L-leucine biosynthesis; L-leucine from 3-methyl-2-oxobutanoate: step 1/4. In terms of biological role, catalyzes the condensation of the acetyl group of acetyl-CoA with 3-methyl-2-oxobutanoate (2-ketoisovalerate) to form 3-carboxy-3-hydroxy-4-methylpentanoate (2-isopropylmalate). In Listeria innocua serovar 6a (strain ATCC BAA-680 / CLIP 11262), this protein is 2-isopropylmalate synthase.